The following is a 621-amino-acid chain: 1-deoxy-D-xylulose-5-phosphate synthase (621 aa).

Thiamine diphosphate-binding positions include His-80 and 121-123 (GHS). Asp-152 serves as a coordination point for Mg(2+). Thiamine diphosphate-binding positions include 153 to 154 (GA), Asn-181, Tyr-288, and Glu-371. Asn-181 is a binding site for Mg(2+).

It belongs to the transketolase family. DXPS subfamily. Homodimer. Requires Mg(2+) as cofactor. Thiamine diphosphate serves as cofactor.

The catalysed reaction is D-glyceraldehyde 3-phosphate + pyruvate + H(+) = 1-deoxy-D-xylulose 5-phosphate + CO2. It functions in the pathway metabolic intermediate biosynthesis; 1-deoxy-D-xylulose 5-phosphate biosynthesis; 1-deoxy-D-xylulose 5-phosphate from D-glyceraldehyde 3-phosphate and pyruvate: step 1/1. Catalyzes the acyloin condensation reaction between C atoms 2 and 3 of pyruvate and glyceraldehyde 3-phosphate to yield 1-deoxy-D-xylulose-5-phosphate (DXP). This chain is 1-deoxy-D-xylulose-5-phosphate synthase, found in Pectobacterium atrosepticum (strain SCRI 1043 / ATCC BAA-672) (Erwinia carotovora subsp. atroseptica).